Consider the following 870-residue polypeptide: DNA mismatch repair protein MutS (870 aa).

620–627 (GPNMAGKS) is a binding site for ATP.

The protein belongs to the DNA mismatch repair MutS family.

Functionally, this protein is involved in the repair of mismatches in DNA. It is possible that it carries out the mismatch recognition step. This protein has a weak ATPase activity. This chain is DNA mismatch repair protein MutS, found in Acetivibrio thermocellus (strain ATCC 27405 / DSM 1237 / JCM 9322 / NBRC 103400 / NCIMB 10682 / NRRL B-4536 / VPI 7372) (Clostridium thermocellum).